The following is a 412-amino-acid chain: Isocitrate dehydrogenase [NADP] (412 aa).

Residue Thr100 participates in NADP(+) binding. Residues Ser109, Asn111, Arg115, Arg125, and Arg149 each coordinate D-threo-isocitrate. A Mg(2+)-binding site is contributed by Asp301. NADP(+)-binding positions include 333 to 339, Asn346, Tyr385, and Arg389; that span reads HGSAPKY.

Belongs to the isocitrate and isopropylmalate dehydrogenases family. As to quaternary structure, homodimer. Requires Mg(2+) as cofactor. It depends on Mn(2+) as a cofactor.

It carries out the reaction D-threo-isocitrate + NADP(+) = 2-oxoglutarate + CO2 + NADPH. Its function is as follows. Catalyzes the oxidative decarboxylation of isocitrate to 2-oxoglutarate and carbon dioxide with the concomitant reduction of NADP(+). NAD(+) can replace NADP(+) with low efficiency. This is Isocitrate dehydrogenase [NADP] from Archaeoglobus fulgidus (strain ATCC 49558 / DSM 4304 / JCM 9628 / NBRC 100126 / VC-16).